Reading from the N-terminus, the 480-residue chain is Gasdermin-C3 (480 aa).

Positions 1-226 (MGYSFDRASK…TCVILPSATK (226 aa)) are triggers pyroptosis.

It belongs to the gasdermin family. As to quaternary structure, homooligomer; homooligomeric ring-shaped pore complex containing 27-28 subunits when inserted in the membrane. Post-translationally, cleavage by CASP8 relieves autoinhibition by releasing the N-terminal moiety (Gasdermin-C3, N-terminal) that initiates pyroptosis. In terms of processing, palmitoylated.

It localises to the cytoplasm. It is found in the cytosol. The protein resides in the cell membrane. The full-length protein before cleavage is inactive: intramolecular interactions between N- and C-terminal domains mediate autoinhibition in the absence of activation signal. The intrinsic pyroptosis-inducing activity is carried by the released N-terminal moiety (Gasdermin-C3, N-terminal) following cleavage by caspase CASP8. Functionally, this form constitutes the precursor of the pore-forming protein: upon cleavage, the released N-terminal moiety (Gasdermin-C3, N-terminal) binds to membranes and forms pores, triggering pyroptosis. In terms of biological role, pore-forming protein that causes membrane permeabilization and pyroptosis. Produced by the cleavage of gasdermin-C3 by caspase CASP8 in response to death signals. After cleavage, moves to the plasma membrane where it strongly binds to membrane inner leaflet lipids. Homooligomerizes within the membrane and forms pores of 10-15 nanometers (nm) of inner diameter, triggering pyroptosis. In Mus musculus (Mouse), this protein is Gasdermin-C3.